We begin with the raw amino-acid sequence, 257 residues long: 5'-nucleotidase SurE (257 aa).

D8, D9, S40, and N97 together coordinate a divalent metal cation.

It belongs to the SurE nucleotidase family. A divalent metal cation serves as cofactor.

It localises to the cytoplasm. It catalyses the reaction a ribonucleoside 5'-phosphate + H2O = a ribonucleoside + phosphate. Nucleotidase that shows phosphatase activity on nucleoside 5'-monophosphates. The chain is 5'-nucleotidase SurE from Desulforudis audaxviator (strain MP104C).